The following is a 134-amino-acid chain: Putative nickel-responsive regulator (134 aa).

Ni(2+) contacts are provided by His-78, His-89, His-91, and Cys-97.

The protein belongs to the transcriptional regulatory CopG/NikR family. It depends on Ni(2+) as a cofactor.

Transcriptional regulator. The protein is Putative nickel-responsive regulator of Chlorobium limicola (strain DSM 245 / NBRC 103803 / 6330).